The following is a 641-amino-acid chain: 1-deoxy-D-xylulose-5-phosphate synthase (641 aa).

Residues histidine 71 and 112–114 (SHA) contribute to the thiamine diphosphate site. Residue aspartate 144 participates in Mg(2+) binding. Thiamine diphosphate contacts are provided by residues 145 to 146 (GA), asparagine 174, tyrosine 285, and glutamate 366. Residue asparagine 174 participates in Mg(2+) binding.

The protein belongs to the transketolase family. DXPS subfamily. In terms of assembly, homodimer. The cofactor is Mg(2+). It depends on thiamine diphosphate as a cofactor.

The catalysed reaction is D-glyceraldehyde 3-phosphate + pyruvate + H(+) = 1-deoxy-D-xylulose 5-phosphate + CO2. Its pathway is metabolic intermediate biosynthesis; 1-deoxy-D-xylulose 5-phosphate biosynthesis; 1-deoxy-D-xylulose 5-phosphate from D-glyceraldehyde 3-phosphate and pyruvate: step 1/1. In terms of biological role, catalyzes the acyloin condensation reaction between C atoms 2 and 3 of pyruvate and glyceraldehyde 3-phosphate to yield 1-deoxy-D-xylulose-5-phosphate (DXP). The sequence is that of 1-deoxy-D-xylulose-5-phosphate synthase from Mycobacteroides abscessus (strain ATCC 19977 / DSM 44196 / CCUG 20993 / CIP 104536 / JCM 13569 / NCTC 13031 / TMC 1543 / L948) (Mycobacterium abscessus).